The sequence spans 121 residues: ATP synthase epsilon chain (121 aa).

Belongs to the ATPase epsilon chain family. In terms of assembly, F-type ATPases have 2 components, CF(1) - the catalytic core - and CF(0) - the membrane proton channel. CF(1) has five subunits: alpha(3), beta(3), gamma(1), delta(1), epsilon(1). CF(0) has three main subunits: a, b and c.

The protein localises to the cell membrane. Its function is as follows. Produces ATP from ADP in the presence of a proton gradient across the membrane. In Mycobacterium leprae (strain Br4923), this protein is ATP synthase epsilon chain.